The following is a 259-amino-acid chain: tRNA (guanine-N(7)-)-methyltransferase (259 aa).

Residues 1 to 11 (MSNTDNSDKNT) are compositionally biased toward basic and acidic residues. The tract at residues 1–29 (MSNTDNSDKNTKPTGYRPPQTDFNTEFGN) is disordered. 4 residues coordinate S-adenosyl-L-methionine: Glu-89, Glu-114, Asp-141, and Asp-164. The active site involves Asp-164. Residues Lys-168, Asp-200, and 238-241 (TKFE) contribute to the substrate site.

Belongs to the class I-like SAM-binding methyltransferase superfamily. TrmB family.

The enzyme catalyses guanosine(46) in tRNA + S-adenosyl-L-methionine = N(7)-methylguanosine(46) in tRNA + S-adenosyl-L-homocysteine. It functions in the pathway tRNA modification; N(7)-methylguanine-tRNA biosynthesis. Functionally, catalyzes the formation of N(7)-methylguanine at position 46 (m7G46) in tRNA. The polypeptide is tRNA (guanine-N(7)-)-methyltransferase (Corynebacterium diphtheriae (strain ATCC 700971 / NCTC 13129 / Biotype gravis)).